The primary structure comprises 705 residues: Rab guanine nucleotide exchange factor sec2 (705 aa).

Positions 144 to 285 (QTTLDDNLVA…KSVMQGMNIA (142 aa)) form a coiled coil.

This sequence belongs to the SEC2 family.

Guanine nucleotide exchange factor that plays an important role in regulating the growth and virulence, probably by regulating the autophagy pathway. Affects the sensitivity to cell wall disruptors and the cell wall thickness by regulating the expression levels of the cell wall integrity (CWI) pathway genes, thus coordinating the growth and virulence. Positively regulates the autophagy pathway to enhance the expression of CWI pathway genes in the presence of autophagy inducers. The chain is Rab guanine nucleotide exchange factor sec2 from Aspergillus fumigatus (strain ATCC MYA-4609 / CBS 101355 / FGSC A1100 / Af293) (Neosartorya fumigata).